A 625-amino-acid polypeptide reads, in one-letter code: 1-deoxy-D-xylulose-5-phosphate synthase (625 aa).

Thiamine diphosphate contacts are provided by residues His-80 and 121–123 (GHS). Residue Asp-152 participates in Mg(2+) binding. Residues 153-154 (GA), Asn-181, Tyr-290, and Glu-371 each bind thiamine diphosphate. Mg(2+) is bound at residue Asn-181.

Belongs to the transketolase family. DXPS subfamily. In terms of assembly, homodimer. The cofactor is Mg(2+). Requires thiamine diphosphate as cofactor.

The enzyme catalyses D-glyceraldehyde 3-phosphate + pyruvate + H(+) = 1-deoxy-D-xylulose 5-phosphate + CO2. It functions in the pathway metabolic intermediate biosynthesis; 1-deoxy-D-xylulose 5-phosphate biosynthesis; 1-deoxy-D-xylulose 5-phosphate from D-glyceraldehyde 3-phosphate and pyruvate: step 1/1. Functionally, catalyzes the acyloin condensation reaction between C atoms 2 and 3 of pyruvate and glyceraldehyde 3-phosphate to yield 1-deoxy-D-xylulose-5-phosphate (DXP). This Haemophilus influenzae (strain 86-028NP) protein is 1-deoxy-D-xylulose-5-phosphate synthase.